We begin with the raw amino-acid sequence, 639 residues long: Threonine--tRNA ligase (639 aa).

A TGS domain is found at 1 to 62 (MYQLTLPDKS…ETDANIEVLT (62 aa)). Residues 246–537 (DHRKIGKELD…LIEHYEGKFP (292 aa)) form a catalytic region. 3 residues coordinate Zn(2+): Cys337, His388, and His514.

This sequence belongs to the class-II aminoacyl-tRNA synthetase family. In terms of assembly, homodimer. Requires Zn(2+) as cofactor.

The protein localises to the cytoplasm. It carries out the reaction tRNA(Thr) + L-threonine + ATP = L-threonyl-tRNA(Thr) + AMP + diphosphate + H(+). Its function is as follows. Catalyzes the attachment of threonine to tRNA(Thr) in a two-step reaction: L-threonine is first activated by ATP to form Thr-AMP and then transferred to the acceptor end of tRNA(Thr). Also edits incorrectly charged L-seryl-tRNA(Thr). The protein is Threonine--tRNA ligase of Leptospira borgpetersenii serovar Hardjo-bovis (strain JB197).